Here is a 346-residue protein sequence, read N- to C-terminus: Isopentenyl-diphosphate delta-isomerase (346 aa).

9 to 10 contributes to the substrate binding site; sequence RK. FMN-binding positions include Ser67, 68 to 70, Ser98, and Asn127; that span reads SMT. 98–100 is a substrate binding site; sequence SQR. Position 162 (Gln162) interacts with substrate. Glu163 lines the Mg(2+) pocket. Residues Lys194, Thr224, 274-276, and 295-296 each bind FMN; these read GIR and AA.

Belongs to the IPP isomerase type 2 family. As to quaternary structure, homooctamer. Dimer of tetramers. Requires FMN as cofactor. The cofactor is NADPH. It depends on Mg(2+) as a cofactor.

The protein resides in the cytoplasm. It catalyses the reaction isopentenyl diphosphate = dimethylallyl diphosphate. Involved in the biosynthesis of isoprenoids. Catalyzes the 1,3-allylic rearrangement of the homoallylic substrate isopentenyl (IPP) to its allylic isomer, dimethylallyl diphosphate (DMAPP). This is Isopentenyl-diphosphate delta-isomerase from Stutzerimonas stutzeri (strain A1501) (Pseudomonas stutzeri).